We begin with the raw amino-acid sequence, 1684 residues long: GRIP and coiled-coil domain-containing protein 2 (1684 aa).

An N-acetylmethionine modification is found at Met1. A disordered region spans residues Met1–Leu22. The residue at position 11 (Ser11) is a Phosphoserine. Thr14 is modified (phosphothreonine). A coiled-coil region spans residues Val110–Tyr1618. Residues Ser236, Ser1483, and Ser1487 each carry the phosphoserine modification. The segment at Leu1475 to Leu1502 is disordered. The span at Asn1477–Lys1492 shows a compositional bias: polar residues. The tract at residues His1574–Ala1613 is mediates interaction with RAB6A. The segment at His1574 to Arg1684 is mediates interaction with RAB9A. The 51-residue stretch at Arg1609 to Val1659 folds into the GRIP domain.

In terms of assembly, homodimer. Interacts (via GRIP domain) with RAB6A (preferentially in its GTP-bound form). May interact (RAB6A-dependent) with ARL1; according to PubMed:19703403, RAB6A and ARL1 are not involved in GCC2 Golgi localization as proposed by PubMed:18243103. Interacts (probably via GRIP domain) with RAB9A (preferentially in its GTP-bound form). Interacts with CLASP1 and CLASP2; recruits both proteins to membranes of the TGN. Interacts with STX16. Ubiquitous.

The protein localises to the cytoplasm. Its subcellular location is the golgi apparatus. The protein resides in the trans-Golgi network membrane. Golgin which probably tethers transport vesicles to the trans-Golgi network (TGN) and regulates vesicular transport between the endosomes and the Golgi. As a RAB9A effector it is involved in recycling of the mannose 6-phosphate receptor from the late endosomes to the TGN. May also play a role in transport between the recycling endosomes and the Golgi. Required for maintenance of the Golgi structure, it is involved in the biogenesis of noncentrosomal, Golgi-associated microtubules through recruitment of CLASP1 and CLASP2. This is GRIP and coiled-coil domain-containing protein 2 (GCC2) from Homo sapiens (Human).